A 428-amino-acid chain; its full sequence is 5'-deoxyadenosine deaminase (428 aa).

Zn(2+)-binding residues include His59 and His61. Substrate is bound by residues Glu88 and His180. His207 is a binding site for Zn(2+). The substrate site is built by Glu210 and Asp296. Asp296 contacts Zn(2+).

This sequence belongs to the metallo-dependent hydrolases superfamily. MTA/SAH deaminase family. In terms of assembly, homotetramer. It depends on Zn(2+) as a cofactor.

It carries out the reaction 5'-deoxyadenosine + H2O + H(+) = 5'-deoxyinosine + NH4(+). The catalysed reaction is S-adenosyl-L-homocysteine + H2O + H(+) = S-inosyl-L-homocysteine + NH4(+). It catalyses the reaction S-methyl-5'-thioadenosine + H2O + H(+) = S-methyl-5'-thioinosine + NH4(+). The enzyme catalyses adenosine + H2O + H(+) = inosine + NH4(+). It functions in the pathway amino-acid biosynthesis; S-adenosyl-L-methionine biosynthesis. In terms of biological role, catalyzes the deamination of three SAM-derived enzymatic products, namely 5'-deoxyadenosine, S-adenosyl-L-homocysteine, and 5'-methylthioadenosine, to produce the inosine analogs. Can also deaminate adenosine. The preferred substrate for this enzyme is 5'-deoxyadenosine, but all these substrates are efficiently deaminated. Likely functions in a S-adenosyl-L-methionine (SAM) recycling pathway from S-adenosyl-L-homocysteine (SAH) produced from SAM-dependent methylation reactions. May also be involved in the recycling of 5'-deoxyadenosine, whereupon the 5'-deoxyribose moiety of 5'-deoxyinosine is further metabolized to deoxyhexoses used for the biosynthesis of aromatic amino acids in methanogens. This Methanococcus aeolicus (strain ATCC BAA-1280 / DSM 17508 / OCM 812 / Nankai-3) protein is 5'-deoxyadenosine deaminase.